A 162-amino-acid chain; its full sequence is NADH-quinone oxidoreductase subunit I (162 aa).

2 4Fe-4S ferredoxin-type domains span residues 54-83 (RRYE…IESE) and 93-122 (TRYD…ETQI). Residues cysteine 63, cysteine 66, cysteine 69, cysteine 73, cysteine 102, cysteine 105, cysteine 108, and cysteine 112 each coordinate [4Fe-4S] cluster.

Belongs to the complex I 23 kDa subunit family. In terms of assembly, NDH-1 is composed of 14 different subunits. Subunits NuoA, H, J, K, L, M, N constitute the membrane sector of the complex. Requires [4Fe-4S] cluster as cofactor.

The protein resides in the cell inner membrane. The catalysed reaction is a quinone + NADH + 5 H(+)(in) = a quinol + NAD(+) + 4 H(+)(out). Functionally, NDH-1 shuttles electrons from NADH, via FMN and iron-sulfur (Fe-S) centers, to quinones in the respiratory chain. The immediate electron acceptor for the enzyme in this species is believed to be ubiquinone. Couples the redox reaction to proton translocation (for every two electrons transferred, four hydrogen ions are translocated across the cytoplasmic membrane), and thus conserves the redox energy in a proton gradient. This is NADH-quinone oxidoreductase subunit I from Burkholderia ambifaria (strain MC40-6).